A 194-amino-acid chain; its full sequence is MRSASKTRITGETSIELSINLDSQADSTISTGVGFLDHMLTLFSKHSRITLNVKADGDTYVDAHHTVEDVGITLGLCLKEALSDKASINRYGSSYVPMDESLGFCALDLSGRSYLVFDAELTNPKLGDFDTELVEEFFQAVAFNTEMNLHLRVLYGKNTHHKIEALFKAFGRALREAITINPEIKGVNSTKGVL.

Belongs to the imidazoleglycerol-phosphate dehydratase family.

It localises to the cytoplasm. It carries out the reaction D-erythro-1-(imidazol-4-yl)glycerol 3-phosphate = 3-(imidazol-4-yl)-2-oxopropyl phosphate + H2O. It functions in the pathway amino-acid biosynthesis; L-histidine biosynthesis; L-histidine from 5-phospho-alpha-D-ribose 1-diphosphate: step 6/9. In Listeria innocua serovar 6a (strain ATCC BAA-680 / CLIP 11262), this protein is Imidazoleglycerol-phosphate dehydratase.